A 321-amino-acid chain; its full sequence is MDVRALPWLPWLLWLLCRGGGDADSRAPFTPTWPRSREREAAAFRESLNRHRYLNSLFPSENSTAFYGINQFSYLFPEEFKAIYLRSKPSKFPRYSAEVHMSIPNVSLPLRFDWRDKQVVTQVRNQQMCGGCWAFSVVGAVESAYAIKGKPLEDLSVQQVIDCSYNNYGCNGGSTLNALNWLNKMQVKLVKDSEYPFKAQNGLCHYFSGSHSGFSIKGYSAYDFSDQEDEMAKALLTFGPLVVIVDAVSWQDYLGGIIQHHCSSGEANHAVLITGFDKTGSTPYWIVRNSWGSSWGVDGYAHVKMGSNVCGIADSVSSIFV.

The first 23 residues, 1 to 23, serve as a signal peptide directing secretion; that stretch reads MDVRALPWLPWLLWLLCRGGGDA. The propeptide at 24 to 107 is activation peptide; sequence DSRAPFTPTW…EVHMSIPNVS (84 aa). Residues asparagine 62 and asparagine 105 are each glycosylated (N-linked (GlcNAc...) asparagine). Cystine bridges form between cysteine 129–cysteine 170, cysteine 163–cysteine 204, and cysteine 262–cysteine 310. Residue cysteine 132 is part of the active site. Catalysis depends on residues histidine 269 and asparagine 289.

It belongs to the peptidase C1 family. Expressed in all tissues examined. High levels seen in the ovary, kidney and placenta while low levels seen in thymus and skeletal muscle.

It localises to the lysosome. It catalyses the reaction The recombinant human enzyme hydrolyzes synthetic endopeptidase substrates including Z-Phe-Arg-NHMec and Z-Arg-Arg-NHMec.. In terms of biological role, proteolytic enzyme possibly involved in normal cellular protein degradation and turnover. This Homo sapiens (Human) protein is Cathepsin O (CTSO).